A 124-amino-acid polypeptide reads, in one-letter code: Small ribosomal subunit protein uS13 (124 aa).

The span at 92–117 shows a compositional bias: basic residues; sequence RRGLPVRGQRTKSNARTRKGPRKTVA. A disordered region spans residues 92-124; that stretch reads RRGLPVRGQRTKSNARTRKGPRKTVANKKIESK.

Belongs to the universal ribosomal protein uS13 family. Part of the 30S ribosomal subunit. Forms a loose heterodimer with protein S19. Forms two bridges to the 50S subunit in the 70S ribosome.

Functionally, located at the top of the head of the 30S subunit, it contacts several helices of the 16S rRNA. In the 70S ribosome it contacts the 23S rRNA (bridge B1a) and protein L5 of the 50S subunit (bridge B1b), connecting the 2 subunits; these bridges are implicated in subunit movement. Contacts the tRNAs in the A and P-sites. This Mycoplasmoides gallisepticum (strain R(low / passage 15 / clone 2)) (Mycoplasma gallisepticum) protein is Small ribosomal subunit protein uS13.